A 325-amino-acid polypeptide reads, in one-letter code: UPF0324 membrane protein Bd1437 (325 aa).

The next 8 membrane-spanning stretches (helical) occupy residues 21–43 (IAAL…GIVL), 58–80 (YTHH…MVVG), 87–105 (IGYT…MLIG), 115–137 (STLI…APTI), 144–166 (VSVA…PWIG), 211–230 (ARAL…YFRG), 243–260 (PWFI…TWIP), and 302–324 (LQGV…IGWI).

Belongs to the UPF0324 family.

The protein localises to the cell membrane. This is UPF0324 membrane protein Bd1437 from Bdellovibrio bacteriovorus (strain ATCC 15356 / DSM 50701 / NCIMB 9529 / HD100).